The chain runs to 771 residues: Putative 8-amino-7-oxononanoate synthase 2 (771 aa).

Residues 1–418 (MPTGLGYDFL…TVKAAELGEI (418 aa)) are unknown. R407 is a substrate binding site. Residues 419–771 (VLLGTNSYLG…EDLTPQGAAL (353 aa)) are KAPA synthase. 485 to 486 (GY) is a binding site for pyridoxal 5'-phosphate. H510 contacts substrate. Residues S556 and 581–584 (DESH) contribute to the pyridoxal 5'-phosphate site. Position 615 is an N6-(pyridoxal phosphate)lysine (K615).

It in the C-terminal section; belongs to the class-II pyridoxal-phosphate-dependent aminotransferase family. BioF subfamily. Requires pyridoxal 5'-phosphate as cofactor.

It carries out the reaction 6-carboxyhexanoyl-[ACP] + L-alanine + H(+) = (8S)-8-amino-7-oxononanoate + holo-[ACP] + CO2. In terms of biological role, catalyzes the decarboxylative condensation of pimeloyl-[acyl-carrier protein] and L-alanine to produce 8-amino-7-oxononanoate (AON), [acyl-carrier protein], and carbon dioxide. This is Putative 8-amino-7-oxononanoate synthase 2 (bioF2) from Mycobacterium tuberculosis (strain CDC 1551 / Oshkosh).